The following is a 473-amino-acid chain: Cysteine--tRNA ligase (473 aa).

C30 contributes to the Zn(2+) binding site. Positions M32 to H42 match the 'HIGH' region motif. The Zn(2+) site is built by C213, H238, and E242. The short motif at K270–S274 is the 'KMSKS' region element. K273 contributes to the ATP binding site.

It belongs to the class-I aminoacyl-tRNA synthetase family. In terms of assembly, monomer. It depends on Zn(2+) as a cofactor.

It is found in the cytoplasm. The catalysed reaction is tRNA(Cys) + L-cysteine + ATP = L-cysteinyl-tRNA(Cys) + AMP + diphosphate. This chain is Cysteine--tRNA ligase, found in Acinetobacter baumannii (strain AB307-0294).